A 387-amino-acid chain; its full sequence is 1-deoxy-D-xylulose 5-phosphate reductoisomerase (387 aa).

Positions 10, 11, 13, 38, and 122 each coordinate NADPH. Lys123 contributes to the 1-deoxy-D-xylulose 5-phosphate binding site. Glu124 lines the NADPH pocket. Asp148 contacts Mn(2+). 4 residues coordinate 1-deoxy-D-xylulose 5-phosphate: Ser149, Glu150, Ser174, and His197. Glu150 serves as a coordination point for Mn(2+). Gly203 lines the NADPH pocket. 1-deoxy-D-xylulose 5-phosphate is bound by residues Ser210, Asn215, Lys216, and Glu219. Residue Glu219 coordinates Mn(2+).

This sequence belongs to the DXR family. It depends on Mg(2+) as a cofactor. Mn(2+) is required as a cofactor.

The catalysed reaction is 2-C-methyl-D-erythritol 4-phosphate + NADP(+) = 1-deoxy-D-xylulose 5-phosphate + NADPH + H(+). Its pathway is isoprenoid biosynthesis; isopentenyl diphosphate biosynthesis via DXP pathway; isopentenyl diphosphate from 1-deoxy-D-xylulose 5-phosphate: step 1/6. Catalyzes the NADPH-dependent rearrangement and reduction of 1-deoxy-D-xylulose-5-phosphate (DXP) to 2-C-methyl-D-erythritol 4-phosphate (MEP). This chain is 1-deoxy-D-xylulose 5-phosphate reductoisomerase, found in Ehrlichia ruminantium (strain Welgevonden).